The chain runs to 556 residues: Urocanate hydratase (556 aa).

Residues 52-53 (GG), Gln-130, 176-178 (GMG), Glu-196, Arg-201, 242-243 (NA), 263-267 (QTSAH), 273-274 (YL), and Tyr-322 contribute to the NAD(+) site. The active site involves Cys-410. NAD(+) is bound at residue Gly-492.

It belongs to the urocanase family. NAD(+) is required as a cofactor.

It is found in the cytoplasm. The catalysed reaction is 4-imidazolone-5-propanoate = trans-urocanate + H2O. It participates in amino-acid degradation; L-histidine degradation into L-glutamate; N-formimidoyl-L-glutamate from L-histidine: step 2/3. Catalyzes the conversion of urocanate to 4-imidazolone-5-propionate. This Bradyrhizobium diazoefficiens (strain JCM 10833 / BCRC 13528 / IAM 13628 / NBRC 14792 / USDA 110) protein is Urocanate hydratase.